The primary structure comprises 128 residues: MVVIQGKGGKADPRVIGKDEEHQKSIVKLSQIKKIMKDRTRMRISKDALVAVSACVMYLISEITDGAKNVASTDGKKKVMPKHINNAICNDTELHFVGHDWLIKNGGMKSYIAPGDFAVSSKKGSSRD.

The protein belongs to the histone H2A family. The nucleosome is a histone octamer containing two molecules each of H2A, H2B, H3 and H4 assembled in one H3-H4 heterotetramer and two H2A-H2B heterodimers. The octamer wraps approximately 147 bp of DNA.

Its subcellular location is the nucleus. It is found in the chromosome. Its function is as follows. Core component of nucleosome. Nucleosomes wrap and compact DNA into chromatin, limiting DNA accessibility to the cellular machineries which require DNA as a template. Histones thereby play a central role in transcription regulation, DNA repair, DNA replication and chromosomal stability. DNA accessibility is regulated via a complex set of post-translational modifications of histones, also called histone code, and nucleosome remodeling. The protein is Histone H2A (HTA1) of Encephalitozoon cuniculi (strain GB-M1) (Microsporidian parasite).